The chain runs to 455 residues: Rhodopsin (455 aa).

Residues 1–34 (MVESTTLVNQTWWYNPTVDIHPHWAKFDPIPDAV) lie on the Extracellular side of the membrane. Asn9 carries N-linked (GlcNAc...) asparagine glycosylation. Residues 35 to 59 (YYSVGIFIGVVGIIGILGNGVVIYL) form a helical membrane-spanning segment. Residues 60 to 71 (FSKTKSLQTPAN) lie on the Cytoplasmic side of the membrane. Residues 72–98 (MFIINLAMSDLSFSAINGFPLKTISAF) traverse the membrane as a helical segment. Residues 99–110 (MKKWIFGKVACQ) lie on the Extracellular side of the membrane. Cys109 and Cys187 are oxidised to a cystine. Residues 111–132 (LYGLLGGIFGFMSINTMAMISI) traverse the membrane as a helical segment. The 'Ionic lock' involved in activated form stabilization motif lies at 133-135 (DRY). The Cytoplasmic portion of the chain corresponds to 133-152 (DRYNVIGRPMAASKKMSHRR). The helical transmembrane segment at 153–173 (AFLMIIFVWMWSIVWSVGPVF) threads the bilayer. Residues 174–200 (NWGAYVPEGILTSCSFDYLSTDPSTRS) lie on the Extracellular side of the membrane. A helical transmembrane segment spans residues 201–225 (FILCMYFCGFMLPIIIIAFCYFNIV). Residues 226–262 (MSVSNHEKEMAAMAKRLNAKELRKAQAGASAEMKLAK) are Cytoplasmic-facing. The helical transmembrane segment at 263–284 (ISMVIITQFMLSWSPYAIIALL) threads the bilayer. The Extracellular portion of the chain corresponds to 285–294 (AQFGPAEWVT). Residues 295–316 (PYAAELPVLFAKASAIHNPIVY) form a helical membrane-spanning segment. Lys306 is modified (N6-(retinylidene)lysine). At 317–455 (SVSHPKFREA…QGVDNQAYQA (139 aa)) the chain is on the cytoplasmic side. 2 S-palmitoyl cysteine lipidation sites follow: Cys337 and Cys338. Positions 378 to 387 (QKMQAQQAAY) are enriched in low complexity. The interval 378–455 (QKMQAQQAAY…QGVDNQAYQA (78 aa)) is disordered. The span at 388–433 (QPPPPPQGYPPQGYPPQGAYPPPQGYPPQGYPPQGYPPQGYPPQGA) shows a compositional bias: pro residues. Repeat copies occupy residues 395 to 399 (GYPPQ), 400 to 404 (GYPPQ), 412 to 416 (GYPPQ), 417 to 421 (GYPPQ), 422 to 426 (GYPPQ), and 427 to 431 (GYPPQ). The interval 395–431 (GYPPQGYPPQGAYPPPQGYPPQGYPPQGYPPQGYPPQ) is 6 X 5 AA repeats of G-Y-P-P-Q.

This sequence belongs to the G-protein coupled receptor 1 family. Opsin subfamily. Contains one covalently linked retinal chromophore. Upon light absorption, the covalently bound 11-cis-retinal is converted to all-trans-retinal. After hydrolysis of the Schiff base and release of the covalently bound all-trans-retinal, active rhodopsin is regenerated by binding of a fresh molecule of 11-cis-retinal.

Its subcellular location is the cell projection. The protein localises to the rhabdomere membrane. Its function is as follows. Photoreceptor required for image-forming vision at low light intensity. Light-induced isomerization of 11-cis to all-trans retinal triggers a conformational change that activates signaling via G-proteins. Signaling mediates the activation of phospholipase C. Subsequent receptor phosphorylation mediates displacement of the bound G-protein alpha subunit by arrestin and terminates signaling. This Enteroctopus dofleini (North Pacific giant octopus) protein is Rhodopsin (RHO).